A 93-amino-acid polypeptide reads, in one-letter code: Large ribosomal subunit protein eL31 (93 aa).

The protein belongs to the eukaryotic ribosomal protein eL31 family.

The polypeptide is Large ribosomal subunit protein eL31 (Methanosarcina mazei (strain ATCC BAA-159 / DSM 3647 / Goe1 / Go1 / JCM 11833 / OCM 88) (Methanosarcina frisia)).